Reading from the N-terminus, the 143-residue chain is Anti-sigma F factor (143 aa).

It belongs to the anti-sigma-factor family.

The catalysed reaction is L-seryl-[protein] + ATP = O-phospho-L-seryl-[protein] + ADP + H(+). It catalyses the reaction L-threonyl-[protein] + ATP = O-phospho-L-threonyl-[protein] + ADP + H(+). Binds to sigma F and blocks its ability to form an RNA polymerase holoenzyme (E-sigma F). Phosphorylates SpoIIAA on a serine residue. This phosphorylation may enable SpoIIAA to act as an anti-anti-sigma factor that counteracts SpoIIAB and thus releases sigma F from inhibition. This chain is Anti-sigma F factor, found in Clostridium botulinum (strain Alaska E43 / Type E3).